The sequence spans 282 residues: Protein GAM-1 (282 aa).

Residues 251–260 (SLQDWARLGV) carry the BC-box-like motif.

Interacts with host HDAC1. Interacts with host E1-activating enzyme (SAE1/UBA2 heterodimer). Interacts with host retinoblastoma protein. Seems to form a complex with host E4F1 and HDAC1. Seems to form complexes with either CUL2-elongin BC complex-RBX1 or CUL5-elongin BC complex-RBX1. Interacts with TCEB1/Elongin-C, CUL2 and CUL5 in vitro.

Its subcellular location is the host nucleus. Its function is as follows. Early protein essential for viral replication. Strong and global transcriptional activator of both viral and cellular genes. Activates transcription by blocking host retinoblastoma protein (RB) and inhibiting the SUMO pathway. Inhibition of host RB leads to the activation of E2F1-dependent transcription and, in particular, of E2F1-regulated S-phase genes. Stimulation of progression from G1 to S phase allows the virus to efficiently use the cellular DNA replicating machinery to achieve viral genome replication. Blocks the SUMO pathway by targeting the E1 enzyme (SAE1/UBA2 heterodimer) to the ubiquitin-proteasome machinery. Mediates SAE1 degradation possibly through the formation of complexes with either CUL2-elongin BC complex-RBX1 or CUL5-elongin BC complex-RBX1. The degradation of UBA2 is probably a consequent effect of SAE1 disappearance. Inhibits HDAC1 sumoylation, thereby interfering with histone deacetylation mediated by HDAC1, leading to activation of transcription. Mediates induction of heat-shock response. Seems to have an antiapoptotic function. This chain is Protein GAM-1, found in Galliformes (FAdV-1).